A 1331-amino-acid polypeptide reads, in one-letter code: Xanthine dehydrogenase/oxidase (1331 aa).

The 88-residue stretch at 4 to 91 folds into the 2Fe-2S ferredoxin-type domain; sequence DELVFFVNGK…HVAVTTVEGI (88 aa). [2Fe-2S] cluster contacts are provided by cysteine 43, cysteine 48, cysteine 51, cysteine 73, cysteine 112, cysteine 115, cysteine 147, and cysteine 149. Residues 228–413 form the FAD-binding PCMH-type domain; that stretch reads FEGERVTWIQ…LSIEIPYSKE (186 aa). FAD contacts are provided by residues 256-263, phenylalanine 336, 346-350, aspartate 359, leucine 403, and lysine 421; these read LVVGNTEI and SIGGN. Cysteine 535 and cysteine 992 form a disulfide bridge. The Mo-molybdopterin site is built by glutamine 767 and phenylalanine 798. Substrate-binding residues include glutamate 802 and arginine 880. A Mo-molybdopterin-binding site is contributed by arginine 912. Positions 914 and 1010 each coordinate substrate. Alanine 1079 lines the Mo-molybdopterin pocket. The active-site Proton acceptor is glutamate 1261.

This sequence belongs to the xanthine dehydrogenase family. In terms of assembly, homodimer. Interacts with BTN1A1. Requires [2Fe-2S] cluster as cofactor. The cofactor is FAD. It depends on Mo-molybdopterin as a cofactor. In terms of processing, subject to partial proteolysis; this alters the enzyme from the dehydrogenase form (D) to the oxidase form (O). Post-translationally, contains sulfhydryl groups that are easily oxidized (in vitro); this alters the enzyme from the dehydrogenase form (D) to the oxidase form (O).

The protein localises to the peroxisome. The protein resides in the cytoplasm. It localises to the secreted. It carries out the reaction xanthine + NAD(+) + H2O = urate + NADH + H(+). It catalyses the reaction hypoxanthine + NAD(+) + H2O = xanthine + NADH + H(+). The catalysed reaction is xanthine + O2 + H2O = urate + H2O2. With respect to regulation, can be converted from the dehydrogenase form (D) to the oxidase form (O) irreversibly by proteolysis or reversibly through the oxidation of sulfhydryl groups. Its function is as follows. Key enzyme in purine degradation. Catalyzes the oxidation of hypoxanthine to xanthine. Catalyzes the oxidation of xanthine to uric acid. Contributes to the generation of reactive oxygen species. The polypeptide is Xanthine dehydrogenase/oxidase (Xdh) (Rattus norvegicus (Rat)).